Reading from the N-terminus, the 382-residue chain is MMKYELKSTSGMARRGRLTFSRPQGECYVETPAFMPVGTYGTVKGMTPEEVKATGAQILLGNTFHLWLRPGQEIMKMHGDLHDFMQWHGPILTDSGGFQVLSLGKLRKIKEEGVTFQNPISGEKIFLSPEKSMEIQYDLGSDIVMIFDECTPYPATLEYAKKSMEMSLRWAKRSRTRFDELANPRALFGIVQGSTYEELRRESVKGLINIGFDGYAVGGLAVGEPKEEMHRILEFTTPLLPQDKPRYLMGVGKPEDLVEGVRRGIDMFDCVMPTRNARNGHLFVSDGVVKIRNAKYKNDTTPLDAECDCYTCKNYTKAYLYHLDKCGEILGARLNTIHNLRYYQRLMAQIRQAIEQDCFDEFVVEFYAKIGKEVPPLHLKSE.

Catalysis depends on Asp94, which acts as the Proton acceptor. Substrate-binding positions include 94 to 98 (DSGGF), Asp148, Gln192, and Gly219. Residues 250–256 (GVGKPED) are RNA binding. Asp269 functions as the Nucleophile in the catalytic mechanism. An RNA binding; important for wobble base 34 recognition region spans residues 274–278 (TRNAR). Residues Cys307, Cys309, Cys312, and His338 each contribute to the Zn(2+) site.

It belongs to the queuine tRNA-ribosyltransferase family. As to quaternary structure, homodimer. Within each dimer, one monomer is responsible for RNA recognition and catalysis, while the other monomer binds to the replacement base PreQ1. It depends on Zn(2+) as a cofactor.

It carries out the reaction 7-aminomethyl-7-carbaguanine + guanosine(34) in tRNA = 7-aminomethyl-7-carbaguanosine(34) in tRNA + guanine. It functions in the pathway tRNA modification; tRNA-queuosine biosynthesis. Functionally, catalyzes the base-exchange of a guanine (G) residue with the queuine precursor 7-aminomethyl-7-deazaguanine (PreQ1) at position 34 (anticodon wobble position) in tRNAs with GU(N) anticodons (tRNA-Asp, -Asn, -His and -Tyr). Catalysis occurs through a double-displacement mechanism. The nucleophile active site attacks the C1' of nucleotide 34 to detach the guanine base from the RNA, forming a covalent enzyme-RNA intermediate. The proton acceptor active site deprotonates the incoming PreQ1, allowing a nucleophilic attack on the C1' of the ribose to form the product. After dissociation, two additional enzymatic reactions on the tRNA convert PreQ1 to queuine (Q), resulting in the hypermodified nucleoside queuosine (7-(((4,5-cis-dihydroxy-2-cyclopenten-1-yl)amino)methyl)-7-deazaguanosine). This is Queuine tRNA-ribosyltransferase from Haemophilus ducreyi (strain 35000HP / ATCC 700724).